The sequence spans 338 residues: L-serine dehydratase (338 aa).

K39 bears the N6-(pyridoxal phosphate)lysine mark.

This sequence belongs to the serine/threonine dehydratase family. The cofactor is pyridoxal 5'-phosphate.

It is found in the cytoplasm. The enzyme catalyses L-serine = pyruvate + NH4(+). It functions in the pathway carbohydrate biosynthesis; gluconeogenesis. The chain is L-serine dehydratase (SDL1) from Saccharomyces cerevisiae (strain RM11-1a) (Baker's yeast).